Consider the following 503-residue polypeptide: Cytochrome P450 monooxygenase roqO (503 aa).

Residues 11 to 31 (YSGTACAISLFIFGITLLFPF) form a helical membrane-spanning segment. A glycan (N-linked (GlcNAc...) asparagine) is linked at N205. C444 is a binding site for heme.

The protein belongs to the cytochrome P450 family. Heme is required as a cofactor.

Its subcellular location is the membrane. It participates in alkaloid biosynthesis. Functionally, cytochrome P450 monooxygenase; part of the gene cluster that mediates the biosynthesis of the mycotoxin meleagrin. The first stage is catalyzed by the dipeptide synthase roqA which condenses histidine and tryptophan to produce histidyltryptophanyldiketopiperazine (HTD). HTD is then converted to roquefortine C through two possible pathways. In the first pathway, prenyltransferase roqD transforms HTD to the intermediate roquefortine D, which is in turn converted to roquefortine C by the cytochrome P450 monooxygenase roqR. In the second pathway, HTD is first converted to the intermediate dehydrohistidyltryptophanyldi-ketopiperazine (DHTD) by roqR which is then prenylated by roqD to form roquefortine C. Roquefortine C can be further transformed to meleagrin via three more reactions including oxydation to glandicolin A by roqM, which is further reduced to glandicoline B by roqO. Finally, glandicoline B is converted to meleagrin by the glandicoline B O-methyltransferase roqN. More studies identified further branching and additional metabolites produced by the roquefortine/meleagrin cluster, including roquefortine F, roquefortine L, roquefortine M, roquefortine N and neoxaline. The protein is Cytochrome P450 monooxygenase roqO of Penicillium rubens (strain ATCC 28089 / DSM 1075 / NRRL 1951 / Wisconsin 54-1255) (Penicillium chrysogenum).